Reading from the N-terminus, the 198-residue chain is Vacuolar iron transporter homolog 4 (198 aa).

The Cytoplasmic portion of the chain corresponds to 1-32 (MESNNNNLNLDMEKDQETTFDYSKRAQWLRAA). The helical transmembrane segment at 33-53 (VLGANDGLVSTASLMMGIGAV) threads the bilayer. The Vacuolar segment spans residues 54–60 (KQDVRIM). A helical membrane pass occupies residues 61 to 81 (LLTGFAGLVAGACSMAIGEFI). Over 82–114 (SVYSQYDIEVAQMKRESGGETKKEKLPSPTQAA) the chain is Cytoplasmic. A helical transmembrane segment spans residues 115 to 135 (IASALAFTLGAIVPLLAAAFV). Over 136-141 (KEYKVR) the chain is Vacuolar. The chain crosses the membrane as a helical span at residues 142 to 162 (IGVIVAAVTLALVMFGWLGAV). Residues 163–174 (LGKAPVVKSLVR) are Cytoplasmic-facing. Residues 175-195 (VLIGGWLAMAITFGFTKLVGS) form a helical membrane-spanning segment. Residues 196-198 (HGL) are Vacuolar-facing.

It belongs to the CCC1 family.

Its subcellular location is the vacuole membrane. It carries out the reaction Fe(2+)(in) = Fe(2+)(out). Functionally, probable vacuolar iron transporter that may be involved in the regulation of iron distribution throughout the plant. This is Vacuolar iron transporter homolog 4 from Arabidopsis thaliana (Mouse-ear cress).